Reading from the N-terminus, the 401-residue chain is Imidazolonepropionase (401 aa).

Fe(3+) is bound by residues histidine 66 and histidine 68. Residues histidine 66 and histidine 68 each coordinate Zn(2+). 4-imidazolone-5-propanoate is bound by residues arginine 75, tyrosine 138, and histidine 171. Tyrosine 138 contacts N-formimidoyl-L-glutamate. Histidine 236 contributes to the Fe(3+) binding site. Histidine 236 contacts Zn(2+). Glutamine 239 lines the 4-imidazolone-5-propanoate pocket. Aspartate 311 serves as a coordination point for Fe(3+). Aspartate 311 contacts Zn(2+). Residues asparagine 313 and glycine 315 each coordinate N-formimidoyl-L-glutamate. Threonine 316 is a binding site for 4-imidazolone-5-propanoate.

It belongs to the metallo-dependent hydrolases superfamily. HutI family. Zn(2+) is required as a cofactor. Requires Fe(3+) as cofactor.

It localises to the cytoplasm. The enzyme catalyses 4-imidazolone-5-propanoate + H2O = N-formimidoyl-L-glutamate. It functions in the pathway amino-acid degradation; L-histidine degradation into L-glutamate; N-formimidoyl-L-glutamate from L-histidine: step 3/3. Functionally, catalyzes the hydrolytic cleavage of the carbon-nitrogen bond in imidazolone-5-propanoate to yield N-formimidoyl-L-glutamate. It is the third step in the universal histidine degradation pathway. This chain is Imidazolonepropionase, found in Acinetobacter baumannii (strain ATCC 17978 / DSM 105126 / CIP 53.77 / LMG 1025 / NCDC KC755 / 5377).